Reading from the N-terminus, the 448-residue chain is Tubulin beta-2 chain (448 aa).

Residues Q11, E69, S138, G142, T143, G144, N204, and N226 each coordinate GTP. Residue E69 coordinates Mg(2+). A disordered region spans residues 421-448; sequence EYQQYQDATADEDGEYEDELDGQEEEDM. Positions 429 to 448 are enriched in acidic residues; sequence TADEDGEYEDELDGQEEEDM.

Belongs to the tubulin family. As to quaternary structure, dimer of alpha and beta chains. A typical microtubule is a hollow water-filled tube with an outer diameter of 25 nm and an inner diameter of 15 nM. Alpha-beta heterodimers associate head-to-tail to form protofilaments running lengthwise along the microtubule wall with the beta-tubulin subunit facing the microtubule plus end conferring a structural polarity. Microtubules usually have 13 protofilaments but different protofilament numbers can be found in some organisms and specialized cells. Mg(2+) serves as cofactor.

It localises to the cytoplasm. It is found in the cytoskeleton. Its function is as follows. Tubulin is the major constituent of microtubules, a cylinder consisting of laterally associated linear protofilaments composed of alpha- and beta-tubulin heterodimers. Microtubules grow by the addition of GTP-tubulin dimers to the microtubule end, where a stabilizing cap forms. Below the cap, tubulin dimers are in GDP-bound state, owing to GTPase activity of alpha-tubulin. This is Tubulin beta-2 chain (TUBB2) from Eleusine indica (Goosegrass).